Consider the following 86-residue polypeptide: RNA-binding protein Hfq (86 aa).

In terms of domain architecture, Sm spans 9–68 (DPYLNTLRKEKVPVSIYLVNGIKLQGSIESFDQFVVLLKNTVSQMVYKHAISTVVPARPV). The segment at 67–86 (PVRLPSPTDGEHGDSEPGNA) is disordered. Residues 75-86 (DGEHGDSEPGNA) show a composition bias toward basic and acidic residues.

Belongs to the Hfq family. As to quaternary structure, homohexamer.

Functionally, RNA chaperone that binds small regulatory RNA (sRNAs) and mRNAs to facilitate mRNA translational regulation in response to envelope stress, environmental stress and changes in metabolite concentrations. Also binds with high specificity to tRNAs. This chain is RNA-binding protein Hfq, found in Pseudomonas putida (strain GB-1).